Consider the following 448-residue polypeptide: Exodeoxyribonuclease 7 large subunit (448 aa).

This sequence belongs to the XseA family. Heterooligomer composed of large and small subunits.

It localises to the cytoplasm. The catalysed reaction is Exonucleolytic cleavage in either 5'- to 3'- or 3'- to 5'-direction to yield nucleoside 5'-phosphates.. Bidirectionally degrades single-stranded DNA into large acid-insoluble oligonucleotides, which are then degraded further into small acid-soluble oligonucleotides. This chain is Exodeoxyribonuclease 7 large subunit, found in Histophilus somni (strain 129Pt) (Haemophilus somnus).